An 854-amino-acid polypeptide reads, in one-letter code: SH2 domain-containing protein 3C (854 aa).

Serine 22 bears the Phosphoserine mark. Residues 34–43 (RSSASASIRS) show a composition bias toward low complexity. Residues 34–129 (RSSASASIRS…AKEAGEGTEA (96 aa)) form a disordered region. Over residues 99–124 (EVSRESHLVSRRLPEPPDLEAAKEAG) the composition is skewed to basic and acidic residues. One can recognise an SH2 domain in the interval 215-314 (WYHGRIPREV…QSGAIIYCPV (100 aa)). Tyrosine 273 and tyrosine 278 each carry phosphotyrosine. 3 disordered regions span residues 330–384 (SQGS…PRDS), 398–417 (LHSPLSPISESPSSPAYSTV), and 422–520 (APSA…ERQK). Residues 333 to 347 (SSKTASPASPSGSKG) show a composition bias toward low complexity. At serine 354 the chain carries Phosphoserine. Composition is skewed to low complexity over residues 400-415 (SPLSPISESPSSPAYS), 422-436 (APSATPSTSAQPASP), and 474-485 (SPSPSLSSYSDP). Serine 435 is modified (phosphoserine). Residues 508 to 520 (TPRKARGSGERQK) are compositionally biased toward basic and acidic residues. The Ras-GEF domain occupies 580-848 (DARTLARHVT…TALSHKLEPA (269 aa)). Tyrosine 787 carries the post-translational modification Phosphotyrosine.

Component of a complex comprised of SH2D3C, BCAR1/CAS, and CRK. Within the complex, interacts with CRK and (via C-terminus) with BCAR1/CAS (via C-terminus). Interacts with NEDD9/HEF1. Interacts with EPHB2. As to quaternary structure, interacts with NEDD9/HEF1. Interacts with BCAR1/CAS. Interacts with PTK2B. In terms of assembly, interacts (via C-terminus) with BCAR1/CAS (via C-terminus). Interacts with IGF1. Post-translationally, phosphorylated by MAPK/ERK upon T-cell receptor stimulation in T-cells. In terms of tissue distribution, expressed in the olfactory bulb and olfactory sensory neurons (at protein level). Expressed in B cells (at protein level). Expressed in T lymphocytes. As to expression, expressed in hematopoietic cells from spleen, lymph node and thymus (at protein level). Expressed weakly in the lung (at protein level). Expressed in the brain, lung, kidney, and weakly expressed in the liver and lung (at protein level).

Its subcellular location is the cytoplasm. It is found in the cell membrane. The protein resides in the cell projection. It localises to the axon. The protein localises to the ruffle membrane. Acts as an adapter protein that mediates cell signaling pathways involved in cellular functions such as cell adhesion and migration, tissue organization, and the regulation of the immune response. Plays a role in integrin-mediated cell adhesion through BCAR1-CRK-RAPGEF1 signaling and activation of the small GTPase RAP1. Promotes cell migration and invasion through the extracellular matrix. Required for marginal zone B-cell development and thymus-independent type 2 immune responses. Mediates migration and adhesion of B cells in the splenic marginal zone via promoting hyperphosphorylation of NEDD9/CASL. Plays a role in CXCL13-induced chemotaxis of B-cells. Plays a role in the migration of olfactory sensory neurons (OSNs) into the forebrain and the innervation of the olfactory bulb by the OSN axons during development. Required for the efficient tyrosine phosphorylation of BCAR1 in OSN axons. In terms of biological role, important regulator of chemokine-induced, integrin-mediated T lymphocyte adhesion and migration, acting upstream of RAP1. Required for tissue-specific adhesion of T lymphocytes to peripheral tissues. Required for basal and CXCL2 stimulated serine-threonine phosphorylation of NEDD9. May be involved in the regulation of T-cell receptor-mediated IL2 production through the activation of the JNK pathway in T-cells. Functionally, may be involved in the BCAR1/CAS-mediated JNK activation pathway. The polypeptide is SH2 domain-containing protein 3C (Sh2d3c) (Mus musculus (Mouse)).